A 173-amino-acid polypeptide reads, in one-letter code: Small ribosomal subunit protein uS13 (173 aa).

The span at 130-143 shows a compositional bias: basic residues; the sequence is GVRHKRGQKVRGQR. Residues 130–155 are disordered; it reads GVRHKRGQKVRGQRTKSTGRTEGTIG.

This sequence belongs to the universal ribosomal protein uS13 family. In terms of assembly, part of the 30S ribosomal subunit. Forms a loose heterodimer with protein S19. Forms two bridges to the 50S subunit in the 70S ribosome.

In terms of biological role, located at the top of the head of the 30S subunit, it contacts several helices of the 16S rRNA. In the 70S ribosome it contacts the 23S rRNA (bridge B1a) and protein L5 of the 50S subunit (bridge B1b), connecting the 2 subunits; these bridges are implicated in subunit movement. The protein is Small ribosomal subunit protein uS13 of Haloquadratum walsbyi (strain DSM 16790 / HBSQ001).